The primary structure comprises 504 residues: MEINLTTKKLDNVKTDAVFFLMFEDNKKLEGELEKIDKALNGGVSDLIKLQKYKAEEGKFLIVPTLGKIKANYVAIVGLGKEKKFENDILRRVASYIIRKAKELKLSDIIIDTNLQQFENYDEVVQAITEGLILGDYSFDKYFSKKDEHKVKEVQVNIPKNQDKDRLNEFVRIGEILAEAQNFTRDLVNEPANVINTIQFAEIAEKLAKEYGFEIKIYDEEEIEKMGMGAYLAVAKGSDNPPRFIHLTYRPKNSQGEVAIVGKGLMFDSGGLNIKTGDFMRWMKSDKSGACAVFGIFKAIGELKPDITVHGIVAAAENMPSGKAYRPDDILKAKNGVTIEVGNTDAEGRLTLADALSYASELKPDAIIDMATLTGACVVALGEFTAGVMGNNQKFINEILKTSEETGEWMWQLPFNDKLREQIKAPHADVYNVGTTRYGGAITAGLFLEKFVDPKIPWVHIDIAGPSHHTSGWYYHPKGATGIPVRTITWYLLKRSKFFDKIGK.

Mn(2+) is bound by residues lysine 263 and aspartate 268. The active site involves lysine 275. Residues aspartate 286, aspartate 345, and glutamate 347 each coordinate Mn(2+). Residue arginine 349 is part of the active site.

Belongs to the peptidase M17 family. Mn(2+) is required as a cofactor.

The protein localises to the cytoplasm. The catalysed reaction is Release of an N-terminal amino acid, Xaa-|-Yaa-, in which Xaa is preferably Leu, but may be other amino acids including Pro although not Arg or Lys, and Yaa may be Pro. Amino acid amides and methyl esters are also readily hydrolyzed, but rates on arylamides are exceedingly low.. The enzyme catalyses Release of an N-terminal amino acid, preferentially leucine, but not glutamic or aspartic acids.. Its function is as follows. Presumably involved in the processing and regular turnover of intracellular proteins. Catalyzes the removal of unsubstituted N-terminal amino acids from various peptides. This chain is Probable cytosol aminopeptidase, found in Sulfurihydrogenibium sp. (strain YO3AOP1).